Reading from the N-terminus, the 208-residue chain is Pyrrolidone-carboxylate peptidase (208 aa).

Catalysis depends on residues E79, C142, and H166.

Belongs to the peptidase C15 family. As to quaternary structure, homotetramer made of two disulfide-linked dimers.

It is found in the cytoplasm. The enzyme catalyses Release of an N-terminal pyroglutamyl group from a polypeptide, the second amino acid generally not being Pro.. In terms of biological role, removes 5-oxoproline from various penultimate amino acid residues except L-proline. The polypeptide is Pyrrolidone-carboxylate peptidase (pcp) (Pyrococcus furiosus (strain ATCC 43587 / DSM 3638 / JCM 8422 / Vc1)).